A 673-amino-acid chain; its full sequence is Zinc finger protein 16 (673 aa).

Over residues 1 to 10 (MPSLRTRREE) the composition is skewed to basic and acidic residues. Residues 1–42 (MPSLRTRREEAEMELSAPGPSPWTPAPQARVSDAPAVTHPGS) are disordered. The tract at residues 62–210 (YQQPDCDTRT…GVPTAESPLI (149 aa)) is necessary for transcription activation. The C2H2-type 1; degenerate zinc finger occupies 209–231 (LICNECGKTFRGNPDLIQRQIVH). Residues 237–259 (FMCDDCGKTFSQNSVLKNRHXSH) form a C2H2-type 2; degenerate zinc finger. A Glycyl lysine isopeptide (Lys-Gly) (interchain with G-Cter in SUMO2) cross-link involves residue K253. 7 C2H2-type zinc fingers span residues 284–306 (YTCT…QKSH), 312–334 (YECN…QRIH), 340–362 (YVCS…HRTH), 368–390 (FECG…QRVH), 396–418 (YECN…HRVH), 424–446 (YKCS…RRIH), and 452–474 (HVCN…QIIH). The segment at 332-364 (RIHSGEKPYVCSECGKAFRRSSNLIKHHRTHTG) is required for nuclear localization. Residues 464-494 (SSVLRKHQIIHTGEKPYRCSVCGKAFSHSSA) form a required for nuclear localization region. K478 is subject to N6-acetyllysine. C2H2-type zinc fingers lie at residues 480 to 502 (YRCS…QGVH), 508 to 530 (YACH…QRVH), 536 to 558 (YECT…QRIH), 564 to 586 (HECN…QKVH), 592 to 614 (YTCV…QIIH), 620 to 642 (YKCS…QRIH), and 648 to 670 (YDCA…QLIH).

It belongs to the krueppel C2H2-type zinc-finger protein family. As to quaternary structure, interacts with INCA1; the interaction inhibits INCA1 activity and induces the cell cycle process.

It localises to the nucleus. Its function is as follows. Acts as a transcriptional activator. Promotes cell proliferation by facilitating the cell cycle phase transition from the S to G2/M phase. Involved in both the hemin- and phorbol myristate acetate (PMA)-induced erythroid and megakaryocytic differentiation, respectively. Also plays a role as an inhibitor of cell apoptosis. This chain is Zinc finger protein 16 (ZNF16), found in Pan paniscus (Pygmy chimpanzee).